The primary structure comprises 548 residues: (S)-beta-macrocarpene synthase (548 aa).

Mg(2+) is bound by residues Asp-302 and Asp-306. Substrate is bound by residues Asp-302, Asp-306, Arg-443, and Asn-446. Residues 302–306 (DDTLD) carry the DDXXD motif motif. Positions 446, 450, and 454 each coordinate Mg(2+).

Belongs to the terpene synthase family. In terms of assembly, monomer. Mg(2+) is required as a cofactor. Requires Mn(2+) as cofactor. In terms of tissue distribution, expressed in roots. Not detected in leaves, unless damaged by herbivory or infected by fungi.

It localises to the cytoplasm. The enzyme catalyses (S)-beta-bisabolene = (S)-beta-macrocarpene. It carries out the reaction (2E,6E)-farnesyl diphosphate = (S)-beta-bisabolene + diphosphate. The catalysed reaction is (2E)-geranyl diphosphate = (4S)-limonene + diphosphate. It catalyses the reaction (2E)-geranyl diphosphate = beta-myrcene + diphosphate. The enzyme catalyses (2E)-geranyl diphosphate = terpinolene + diphosphate. It carries out the reaction (2E)-geranyl diphosphate + H2O = (S)-linalool + diphosphate. It functions in the pathway secondary metabolite biosynthesis; terpenoid biosynthesis. Functionally, involved in the biosynthesis of the bicyclic sesquiterpene (S)-beta-macrocarpene. Can use both geranyl diphosphate and farnesyl diphosphate as substrate, but not geranylgeranyl diphosphate. Produces mainly (S)-beta-macrocarpene, but also smaller amounts of beta-bisabolene and (E)-beta-farnesene when used with farnesyl diphosphate as substrate. In the presence of geranyl diphosphate, produces the acyclic monoterpenes beta-myrcene and linalool along with minor amounts of the cyclic compounds limonene, alpha-thujene, sabinene and alpha-terpinolene. May be involved in plant defense. In Zea mays (Maize), this protein is (S)-beta-macrocarpene synthase.